The chain runs to 87 residues: UPF0512 protein B (87 aa).

It belongs to the UPF0512 family.

The polypeptide is UPF0512 protein B (Dictyostelium discoideum (Social amoeba)).